The sequence spans 204 residues: Large ribosomal subunit protein uL4 (204 aa).

The disordered stretch occupies residues 53 to 74; it reads AYVSGGGKKPWRQKGRGGARAG.

It belongs to the universal ribosomal protein uL4 family. As to quaternary structure, part of the 50S ribosomal subunit.

In terms of biological role, one of the primary rRNA binding proteins, this protein initially binds near the 5'-end of the 23S rRNA. It is important during the early stages of 50S assembly. It makes multiple contacts with different domains of the 23S rRNA in the assembled 50S subunit and ribosome. Functionally, forms part of the polypeptide exit tunnel. This Campylobacter curvus (strain 525.92) protein is Large ribosomal subunit protein uL4.